The chain runs to 178 residues: Large ribosomal subunit protein uL6 (178 aa).

The protein belongs to the universal ribosomal protein uL6 family. As to quaternary structure, part of the 50S ribosomal subunit.

This protein binds to the 23S rRNA, and is important in its secondary structure. It is located near the subunit interface in the base of the L7/L12 stalk, and near the tRNA binding site of the peptidyltransferase center. The sequence is that of Large ribosomal subunit protein uL6 from Nitratiruptor sp. (strain SB155-2).